The following is a 220-amino-acid chain: MKTGALTTFLALCLPVTVFATTLRLSNEVDLLVLDGKKVSSSLLRGAESIELENGPHQLVFRVEKTIRLSGNEERLYISPPLVISFDTQLISQVNFQLPRLENEREASHFNAAPRLALLDGDAMPIPVKLDILAITSTAKVVDYEIETERYNKSAKRASLPQFATMMADDSTLLSDVSELDTVPPQSQTLTEQRLKYWFRLADPQTRHHFLQWAEKQPPS.

The N-terminal stretch at 1 to 20 (MKTGALTTFLALCLPVTVFA) is a signal peptide.

Belongs to the UPF0319 family.

This is UPF0319 protein YccT from Salmonella dublin (strain CT_02021853).